Here is a 215-residue protein sequence, read N- to C-terminus: Pyrrolidone-carboxylate peptidase (215 aa).

Residues Glu81, Cys144, and His168 contribute to the active site.

It belongs to the peptidase C15 family. As to quaternary structure, homotetramer.

The protein localises to the cytoplasm. The enzyme catalyses Release of an N-terminal pyroglutamyl group from a polypeptide, the second amino acid generally not being Pro.. Its function is as follows. Removes 5-oxoproline from various penultimate amino acid residues except L-proline. This is Pyrrolidone-carboxylate peptidase (pcp) from Bacillus subtilis (strain 168).